The following is a 171-amino-acid chain: 3-hydroxydecanoyl-[acyl-carrier-protein] dehydratase (171 aa).

Histidine 71 is an active-site residue.

It belongs to the thioester dehydratase family. FabA subfamily. Homodimer.

The protein localises to the cytoplasm. The enzyme catalyses a (3R)-hydroxyacyl-[ACP] = a (2E)-enoyl-[ACP] + H2O. It carries out the reaction (3R)-hydroxydecanoyl-[ACP] = (2E)-decenoyl-[ACP] + H2O. The catalysed reaction is (2E)-decenoyl-[ACP] = (3Z)-decenoyl-[ACP]. The protein operates within lipid metabolism; fatty acid biosynthesis. Functionally, necessary for the introduction of cis unsaturation into fatty acids. Catalyzes the dehydration of (3R)-3-hydroxydecanoyl-ACP to E-(2)-decenoyl-ACP and then its isomerization to Z-(3)-decenoyl-ACP. Can catalyze the dehydratase reaction for beta-hydroxyacyl-ACPs with saturated chain lengths up to 16:0, being most active on intermediate chain length. The sequence is that of 3-hydroxydecanoyl-[acyl-carrier-protein] dehydratase from Rhizobium rhizogenes (strain K84 / ATCC BAA-868) (Agrobacterium radiobacter).